Consider the following 169-residue polypeptide: S-ribosylhomocysteine lyase (169 aa).

Histidine 54, histidine 58, and cysteine 128 together coordinate Fe cation.

The protein belongs to the LuxS family. Homodimer. It depends on Fe cation as a cofactor.

It carries out the reaction S-(5-deoxy-D-ribos-5-yl)-L-homocysteine = (S)-4,5-dihydroxypentane-2,3-dione + L-homocysteine. In terms of biological role, involved in the synthesis of autoinducer 2 (AI-2) which is secreted by bacteria and is used to communicate both the cell density and the metabolic potential of the environment. The regulation of gene expression in response to changes in cell density is called quorum sensing. Catalyzes the transformation of S-ribosylhomocysteine (RHC) to homocysteine (HC) and 4,5-dihydroxy-2,3-pentadione (DPD). The protein is S-ribosylhomocysteine lyase of Shewanella woodyi (strain ATCC 51908 / MS32).